The following is a 185-amino-acid chain: Elongation factor P (185 aa).

Belongs to the elongation factor P family.

It localises to the cytoplasm. It participates in protein biosynthesis; polypeptide chain elongation. Functionally, involved in peptide bond synthesis. Stimulates efficient translation and peptide-bond synthesis on native or reconstituted 70S ribosomes in vitro. Probably functions indirectly by altering the affinity of the ribosome for aminoacyl-tRNA, thus increasing their reactivity as acceptors for peptidyl transferase. This is Elongation factor P from Herpetosiphon aurantiacus (strain ATCC 23779 / DSM 785 / 114-95).